The following is a 471-amino-acid chain: Thymidine phosphorylase (471 aa).

The segment covering 1-10 (MAAPGTPPPS) has biased composition (pro residues). The disordered stretch occupies residues 1–21 (MAAPGTPPPSASGGGGGEPRQ). A Phosphothreonine modification is found at Thr-6. Substrate contacts are provided by His-102, Arg-188, Ser-203, and Lys-207.

It belongs to the thymidine/pyrimidine-nucleoside phosphorylase family. As to quaternary structure, homodimer.

The enzyme catalyses thymidine + phosphate = 2-deoxy-alpha-D-ribose 1-phosphate + thymine. The protein operates within pyrimidine metabolism; dTMP biosynthesis via salvage pathway; dTMP from thymine: step 1/2. In terms of biological role, catalyzes the reversible phosphorolysis of thymidine. The produced molecules are then utilized as carbon and energy sources or in the rescue of pyrimidine bases for nucleotide synthesis. This Mus musculus (Mouse) protein is Thymidine phosphorylase (Tymp).